We begin with the raw amino-acid sequence, 345 residues long: Probable deoxyhypusine synthase 2 (345 aa).

The active-site Nucleophile is the Lys-292.

It belongs to the deoxyhypusine synthase family. The cofactor is NAD(+).

It carries out the reaction [eIF5A protein]-L-lysine + spermidine = [eIF5A protein]-deoxyhypusine + propane-1,3-diamine. Its pathway is protein modification; eIF5A hypusination. Catalyzes the NAD-dependent oxidative cleavage of spermidine and the subsequent transfer of the butylamine moiety of spermidine to the epsilon-amino group of a specific lysine residue of the eIF-5A precursor protein to form the intermediate deoxyhypusine residue. This is Probable deoxyhypusine synthase 2 (dys2) from Methanosarcina mazei (strain ATCC BAA-159 / DSM 3647 / Goe1 / Go1 / JCM 11833 / OCM 88) (Methanosarcina frisia).